The following is a 294-amino-acid chain: N-acetylmuramic acid 6-phosphate etherase (294 aa).

The SIS domain occupies 54–217; it reads VTKSFEEEGR…STASMIGVGK (164 aa). Glu82 (proton donor) is an active-site residue. Residue Glu113 is part of the active site.

It belongs to the GCKR-like family. MurNAc-6-P etherase subfamily. As to quaternary structure, homodimer.

It catalyses the reaction N-acetyl-D-muramate 6-phosphate + H2O = N-acetyl-D-glucosamine 6-phosphate + (R)-lactate. The protein operates within amino-sugar metabolism; N-acetylmuramate degradation. Functionally, specifically catalyzes the cleavage of the D-lactyl ether substituent of MurNAc 6-phosphate, producing GlcNAc 6-phosphate and D-lactate. The protein is N-acetylmuramic acid 6-phosphate etherase of Bacillus mycoides (strain KBAB4) (Bacillus weihenstephanensis).